Reading from the N-terminus, the 157-residue chain is Endoribonuclease YbeY (157 aa).

Zn(2+)-binding residues include His-116, His-120, and His-126.

The protein belongs to the endoribonuclease YbeY family. The cofactor is Zn(2+).

It localises to the cytoplasm. Functionally, single strand-specific metallo-endoribonuclease involved in late-stage 70S ribosome quality control and in maturation of the 3' terminus of the 16S rRNA. The chain is Endoribonuclease YbeY from Blochmanniella pennsylvanica (strain BPEN).